Here is a 375-residue protein sequence, read N- to C-terminus: Chaperone protein DnaJ (375 aa).

A J domain is found at 5-70 (DYYELLGISR…EKRAAYDQYG (66 aa)). The segment at 132–210 (GTTKDIKIHT…CHGDGRVNKA (79 aa)) adopts a CR-type zinc-finger fold. Zn(2+) is bound by residues Cys-145, Cys-148, Cys-162, Cys-165, Cys-184, Cys-187, Cys-198, and Cys-201. 4 CXXCXGXG motif repeats span residues 145–152 (CDTCHGTG), 162–169 (CPHCHGAG), 184–191 (CHFCHGTG), and 198–205 (CKTCHGDG).

The protein belongs to the DnaJ family. In terms of assembly, homodimer. Requires Zn(2+) as cofactor.

Its subcellular location is the cytoplasm. In terms of biological role, participates actively in the response to hyperosmotic and heat shock by preventing the aggregation of stress-denatured proteins and by disaggregating proteins, also in an autonomous, DnaK-independent fashion. Unfolded proteins bind initially to DnaJ; upon interaction with the DnaJ-bound protein, DnaK hydrolyzes its bound ATP, resulting in the formation of a stable complex. GrpE releases ADP from DnaK; ATP binding to DnaK triggers the release of the substrate protein, thus completing the reaction cycle. Several rounds of ATP-dependent interactions between DnaJ, DnaK and GrpE are required for fully efficient folding. Also involved, together with DnaK and GrpE, in the DNA replication of plasmids through activation of initiation proteins. In Aggregatibacter actinomycetemcomitans (Actinobacillus actinomycetemcomitans), this protein is Chaperone protein DnaJ.